The following is a 398-amino-acid chain: Ribosomal RNA small subunit methyltransferase B (398 aa).

S-adenosyl-L-methionine is bound by residues 221-227 (CGGAGLK), Asp242, Asp268, and Asp283. The Nucleophile role is filled by Cys336.

Belongs to the class I-like SAM-binding methyltransferase superfamily. RsmB/NOP family.

The protein localises to the cytoplasm. The enzyme catalyses cytidine(967) in 16S rRNA + S-adenosyl-L-methionine = 5-methylcytidine(967) in 16S rRNA + S-adenosyl-L-homocysteine + H(+). Specifically methylates the cytosine at position 967 (m5C967) of 16S rRNA. In Thermus thermophilus (strain ATCC 27634 / DSM 579 / HB8), this protein is Ribosomal RNA small subunit methyltransferase B.